A 125-amino-acid polypeptide reads, in one-letter code: Ribonuclease P protein component (125 aa).

The protein belongs to the RnpA family. As to quaternary structure, consists of a catalytic RNA component (M1 or rnpB) and a protein subunit.

It carries out the reaction Endonucleolytic cleavage of RNA, removing 5'-extranucleotides from tRNA precursor.. Its function is as follows. RNaseP catalyzes the removal of the 5'-leader sequence from pre-tRNA to produce the mature 5'-terminus. It can also cleave other RNA substrates such as 4.5S RNA. The protein component plays an auxiliary but essential role in vivo by binding to the 5'-leader sequence and broadening the substrate specificity of the ribozyme. The protein is Ribonuclease P protein component of Clostridium botulinum (strain Alaska E43 / Type E3).